We begin with the raw amino-acid sequence, 337 residues long: 4-hydroxy-2-oxovalerate aldolase (337 aa).

In terms of domain architecture, Pyruvate carboxyltransferase spans 6–256 (IRIMDTTLRD…ETGIDLFQIM (251 aa)). 14–15 (RD) is a binding site for substrate. D15 contacts Mn(2+). H18 (proton acceptor) is an active-site residue. Substrate is bound by residues S168 and H195. Mn(2+) is bound by residues H195 and H197. Position 286 (Y286) interacts with substrate.

It belongs to the 4-hydroxy-2-oxovalerate aldolase family.

It catalyses the reaction (S)-4-hydroxy-2-oxopentanoate = acetaldehyde + pyruvate. In Geobacillus genomosp. 3, this protein is 4-hydroxy-2-oxovalerate aldolase (nahM).